The sequence spans 601 residues: KLDQPAPSTQETSFIEKMKKTGRNIVVFYGSQTGTGEEFANRLSKDAHRYGMGSMAADPEEYDMSELSRLAEIGNSLAIFCMATYGEGDPTDNAQDFYDWLQETDGQLSGVNYPVFALGDKTYEHYNAMGAYVDKRLEELGAKRVFDLGMGDDDGNLEEDFVTWREQFWPAMCEHFGVEASGEDSSVRQYELKEHNDINMNKVYTGELGRLKSFETQKPPFDAKNPFLAPVTVNRKLNKAGELHKMHLEVDITGSKIRYESGDHVAVYPTNNTVIVNRLGQILGVDLDSVISLNNLDEESNKKHPFPCPTTYRTALTHYLDIIHPPRTNVLYELAQYATDLKDQENTDSMASSAPEGKALYQSFVLEDNRNILAILEDLPSLRPPIDHLCELMPRLQARYYSIASSSKVHPNSIHICAVLVEYXTKGVATTWLKYIRKSQFRLPFKASNPVIMVGPGTGIAPFMGFIQERGWLKESGKEVGETVLYCGCRHKEEDYLYQEELEQAHKKGALTKLNVAFSREQDQKVYVQHLLRKNKVDLWRQIHEDYAHIYICGDARNMARDVQTAFYEIAEELGGMTRTQATDYIKKLMTKGRYSQDVWS.

In terms of domain architecture, Flavodoxin-like spans 25 to 169 (IVVFYGSQTG…DFVTWREQFW (145 aa)). FMN-binding positions include 31-36 (SQTGTG), 83-86 (ATYG), 118-127 (LGDKTYEHYN), and D153. Residues 224 to 425 (KNPFLAPVTV…ICAVLVEYXT (202 aa)) enclose the FAD-binding FR-type domain. FAD contacts are provided by residues 399 to 402 (RYYS), 417 to 419 (CAV), Y423, and 427 to 430 (GVAT). Residues T458, 519–520 (SR), 525–529 (KVYVQ), and D562 contribute to the NADP(+) site. W600 serves as a coordination point for FAD.

The protein belongs to the NADPH--cytochrome P450 reductase family. It in the N-terminal section; belongs to the flavodoxin family. This sequence in the C-terminal section; belongs to the flavoprotein pyridine nucleotide cytochrome reductase family. Requires FAD as cofactor. It depends on FMN as a cofactor.

Its subcellular location is the endoplasmic reticulum membrane. It catalyses the reaction 2 oxidized [cytochrome P450] + NADPH = 2 reduced [cytochrome P450] + NADP(+) + H(+). Functionally, this enzyme is required for electron transfer from NADP to cytochrome P450 in microsomes. It can also provide electron transfer to heme oxygenase and cytochrome B5. The polypeptide is NADPH--cytochrome P450 reductase (Salmo trutta (Brown trout)).